The following is a 324-amino-acid chain: Arginase (324 aa).

Mn(2+)-binding residues include His-115, Asp-143, His-145, and Asp-147. Substrate contacts are provided by residues 145–149, 156–158, and Asp-202; these read HADIN and SGN. Residues Asp-249 and Asp-251 each coordinate Mn(2+). Substrate-binding residues include Thr-263 and Glu-294.

The protein belongs to the arginase family. Homotrimer. Mn(2+) serves as cofactor.

The enzyme catalyses L-arginine + H2O = urea + L-ornithine. Its pathway is nitrogen metabolism; urea cycle; L-ornithine and urea from L-arginine: step 1/1. This Emericella nidulans (strain FGSC A4 / ATCC 38163 / CBS 112.46 / NRRL 194 / M139) (Aspergillus nidulans) protein is Arginase (agaA).